Here is a 217-residue protein sequence, read N- to C-terminus: Thiamine-phosphate synthase (217 aa).

4-amino-2-methyl-5-(diphosphooxymethyl)pyrimidine is bound by residues Gln-39–Lys-43 and Asn-71. Mg(2+) contacts are provided by Asp-72 and Asp-91. Thr-110 is a 4-amino-2-methyl-5-(diphosphooxymethyl)pyrimidine binding site. Position 137 to 139 (Ser-137 to Thr-139) interacts with 2-[(2R,5Z)-2-carboxy-4-methylthiazol-5(2H)-ylidene]ethyl phosphate. Lys-140 is a 4-amino-2-methyl-5-(diphosphooxymethyl)pyrimidine binding site. Gly-167 serves as a coordination point for 2-[(2R,5Z)-2-carboxy-4-methylthiazol-5(2H)-ylidene]ethyl phosphate.

The protein belongs to the thiamine-phosphate synthase family. Mg(2+) serves as cofactor.

The enzyme catalyses 2-[(2R,5Z)-2-carboxy-4-methylthiazol-5(2H)-ylidene]ethyl phosphate + 4-amino-2-methyl-5-(diphosphooxymethyl)pyrimidine + 2 H(+) = thiamine phosphate + CO2 + diphosphate. It catalyses the reaction 2-(2-carboxy-4-methylthiazol-5-yl)ethyl phosphate + 4-amino-2-methyl-5-(diphosphooxymethyl)pyrimidine + 2 H(+) = thiamine phosphate + CO2 + diphosphate. The catalysed reaction is 4-methyl-5-(2-phosphooxyethyl)-thiazole + 4-amino-2-methyl-5-(diphosphooxymethyl)pyrimidine + H(+) = thiamine phosphate + diphosphate. The protein operates within cofactor biosynthesis; thiamine diphosphate biosynthesis; thiamine phosphate from 4-amino-2-methyl-5-diphosphomethylpyrimidine and 4-methyl-5-(2-phosphoethyl)-thiazole: step 1/1. Condenses 4-methyl-5-(beta-hydroxyethyl)thiazole monophosphate (THZ-P) and 2-methyl-4-amino-5-hydroxymethyl pyrimidine pyrophosphate (HMP-PP) to form thiamine monophosphate (TMP). In Saccharophagus degradans (strain 2-40 / ATCC 43961 / DSM 17024), this protein is Thiamine-phosphate synthase.